The following is a 247-amino-acid chain: Terpene cyclase ausL (247 aa).

6 consecutive transmembrane segments (helical) span residues 49–69 (AIAVLPLCCDIAWEFTYAWIY), 75–95 (HWQGVVRVWFFLHTAVLAATL), 114–134 (LVLLYVAVIGAFAAGQLCLAL), 138–158 (GALGFHWGGALCQFLSSSGAV), 171–191 (SLVIWGARAISTAGGFVKLCI), and 206–226 (PMCWFYIGIVLSLDASYPVLY).

The protein belongs to the paxB family.

The protein localises to the membrane. It functions in the pathway secondary metabolite biosynthesis; terpenoid biosynthesis. Functionally, terpene cyclase; part of the gene cluster that mediates the biosynthesis of calidodehydroaustin, a fungal meroterpenoid. The first step of the pathway is the synthesis of 3,5-dimethylorsellinic acid by the polyketide synthase ausA. 3,5-dimethylorsellinic acid is then prenylated by the polyprenyl transferase ausN. Further epoxidation by the FAD-dependent monooxygenase ausM and cyclization by the probable terpene cyclase ausL lead to the formation of protoaustinoid A. Protoaustinoid A is then oxidized to spiro-lactone preaustinoid A3 by the combined action of the FAD-binding monooxygenases ausB and ausC, and the dioxygenase ausE. Acid-catalyzed keto-rearrangement and ring contraction of the tetraketide portion of preaustinoid A3 by ausJ lead to the formation of preaustinoid A4. The aldo-keto reductase ausK, with the help of ausH, is involved in the next step by transforming preaustinoid A4 into isoaustinone which is in turn hydroxylated by the P450 monooxygenase ausI to form austinolide. The cytochrome P450 monooxygenase ausG modifies austinolide to austinol. Austinol is further acetylated to austin by the O-acetyltransferase ausP, which spontaneously changes to dehydroaustin. The cytochrome P450 monooxygenase ausR then converts dehydroaustin is into 7-dehydrodehydroaustin. The hydroxylation catalyzed by ausR permits the O-acetyltransferase ausQ to add an additional acetyl group to the molecule, leading to the formation of acetoxydehydroaustin. The short chain dehydrogenase ausT catalyzes the reduction of the double bond present between carbon atoms 1 and 2 to convert 7-dehydrodehydroaustin into 1,2-dihydro-7-hydroxydehydroaustin. AusQ catalyzes not only an acetylation reaction but also the addition of the PKS ausV diketide product to 1,2-dihydro-7-hydroxydehydroaustin, forming precalidodehydroaustin. Finally, the iron/alpha-ketoglutarate-dependent dioxygenase converts precalidodehydroaustin into calidodehydroaustin. The polypeptide is Terpene cyclase ausL (Aspergillus calidoustus).